The sequence spans 261 residues: Calbindin (261 aa).

Ala2 is modified (N-acetylalanine). Residues Ala2 to Gln7 form an interaction with RANBP9 region. 5 consecutive EF-hand domains span residues Ile11–Ala46, Glu53–Phe88, Lys98–Lys133, Lys142–Phe177, and Met186–Lys221. Ca(2+)-binding residues include Asp24, Asp26, Ser28, Tyr30, and Glu35. Residues Asp111, Asp113, Ser115, Glu122, Asp155, Asn157, Asp159, Lys161, Glu166, Asp199, Asp201, Asn203, Tyr205, and Glu210 each contribute to the Ca(2+) site.

The protein belongs to the calbindin family. Interacts with RANBP9.

Its function is as follows. Buffers cytosolic calcium. May stimulate a membrane Ca(2+)-ATPase and a 3',5'-cyclic nucleotide phosphodiesterase. In Homo sapiens (Human), this protein is Calbindin (CALB1).